A 314-amino-acid chain; its full sequence is Acetyl-coenzyme A carboxylase carboxyl transferase subunit alpha (314 aa).

The CoA carboxyltransferase C-terminal domain occupies 32 to 289; it reads EIDMLEASLE…KSAFVAQLDS (258 aa).

The protein belongs to the AccA family. As to quaternary structure, acetyl-CoA carboxylase is a heterohexamer composed of biotin carboxyl carrier protein (AccB), biotin carboxylase (AccC) and two subunits each of ACCase subunit alpha (AccA) and ACCase subunit beta (AccD).

It localises to the cytoplasm. The catalysed reaction is N(6)-carboxybiotinyl-L-lysyl-[protein] + acetyl-CoA = N(6)-biotinyl-L-lysyl-[protein] + malonyl-CoA. The protein operates within lipid metabolism; malonyl-CoA biosynthesis; malonyl-CoA from acetyl-CoA: step 1/1. Component of the acetyl coenzyme A carboxylase (ACC) complex. First, biotin carboxylase catalyzes the carboxylation of biotin on its carrier protein (BCCP) and then the CO(2) group is transferred by the carboxyltransferase to acetyl-CoA to form malonyl-CoA. This chain is Acetyl-coenzyme A carboxylase carboxyl transferase subunit alpha, found in Staphylococcus aureus (strain NCTC 8325 / PS 47).